A 316-amino-acid polypeptide reads, in one-letter code: MRQPLSWGRWRAMLARTYGPGPSAGYRWASGAQGYVRNPPVGACDLQGELDRFGGISVRLARLDALDRLDAAAFQKGLQAAVQQWRSEGRTAVWLHIPILQSRFIAPAASLGFCFHHAESDSSTLTLWLREGPSRLPGYASHQVGVAGAVFDESTRKILVVQDRNKLKNMWKFPGGLSEPEEDIGDTAVREVFEETGIKSEFRSVLSIRQQHTNPGAFGKSDMYIICRLKPYSFTINFCQEECLRCEWMDLNDLAKTENTTPITSRVARLLLYGYREGFDKIDLTVEELPAVYTGLFYKLYHKELPENYKTMKGID.

Residues 141-273 (SHQVGVAGAV…TSRVARLLLY (133 aa)) form the Nudix hydrolase domain. The Nudix box signature appears at 176–197 (GLSEPEEDIGDTAVREVFEETG).

It belongs to the Nudix hydrolase family. Monomer and homodimer. As to expression, detected in liver, kidney and esophagus (at protein level). Ubiquitous.

It localises to the cytoplasm. Its subcellular location is the nucleus. It is found in the mitochondrion. May contribute to the regulation of cell proliferation. This chain is Nucleoside diphosphate-linked moiety X motif 6 (NUDT6), found in Homo sapiens (Human).